Here is a 66-residue protein sequence, read N- to C-terminus: Putative antitoxin APE_0279a.1 (66 aa).

The protein belongs to the UPF0165 family.

Possibly the antitoxin component of a type II toxin-antitoxin (TA) system. The polypeptide is Putative antitoxin APE_0279a.1 (Aeropyrum pernix (strain ATCC 700893 / DSM 11879 / JCM 9820 / NBRC 100138 / K1)).